The chain runs to 415 residues: Serine hydroxymethyltransferase (415 aa).

(6S)-5,6,7,8-tetrahydrofolate is bound by residues Leu121 and 125 to 127 (GHL). Lys230 is subject to N6-(pyridoxal phosphate)lysine. 355-357 (SPF) is a binding site for (6S)-5,6,7,8-tetrahydrofolate.

Belongs to the SHMT family. In terms of assembly, homodimer. Pyridoxal 5'-phosphate serves as cofactor.

Its subcellular location is the cytoplasm. It catalyses the reaction (6R)-5,10-methylene-5,6,7,8-tetrahydrofolate + glycine + H2O = (6S)-5,6,7,8-tetrahydrofolate + L-serine. The protein operates within one-carbon metabolism; tetrahydrofolate interconversion. Its pathway is amino-acid biosynthesis; glycine biosynthesis; glycine from L-serine: step 1/1. Catalyzes the reversible interconversion of serine and glycine with tetrahydrofolate (THF) serving as the one-carbon carrier. This reaction serves as the major source of one-carbon groups required for the biosynthesis of purines, thymidylate, methionine, and other important biomolecules. Also exhibits THF-independent aldolase activity toward beta-hydroxyamino acids, producing glycine and aldehydes, via a retro-aldol mechanism. This Lactococcus lactis subsp. lactis (strain IL1403) (Streptococcus lactis) protein is Serine hydroxymethyltransferase.